The following is a 45-amino-acid chain: Phospholipase A2 3 (45 aa).

The Ca(2+) site is built by Y20, G24, and G25. A disulfide bond links C21 and C36. Residue H39 is part of the active site. Position 40 (D40) interacts with Ca(2+).

Ca(2+) is required as a cofactor. Expressed by the venom gland.

Its subcellular location is the secreted. The catalysed reaction is a 1,2-diacyl-sn-glycero-3-phosphocholine + H2O = a 1-acyl-sn-glycero-3-phosphocholine + a fatty acid + H(+). Functionally, PLA2 catalyzes the calcium-dependent hydrolysis of the 2-acyl groups in 3-sn-phosphoglycerides. The polypeptide is Phospholipase A2 3 (Bothrops diporus (Chaco lancehead)).